The sequence spans 339 residues: Glyceraldehyde-3-phosphate dehydrogenase (339 aa).

NAD(+)-binding positions include 12-13 (RI), aspartate 39, arginine 84, and serine 127. D-glyceraldehyde 3-phosphate-binding positions include 157-159 (SCT), threonine 188, arginine 203, 216-217 (TG), and arginine 239. Cysteine 158 acts as the Nucleophile in catalysis. Position 320 (asparagine 320) interacts with NAD(+).

The protein belongs to the glyceraldehyde-3-phosphate dehydrogenase family. As to quaternary structure, homotetramer.

It localises to the cytoplasm. It catalyses the reaction D-glyceraldehyde 3-phosphate + phosphate + NAD(+) = (2R)-3-phospho-glyceroyl phosphate + NADH + H(+). Its pathway is carbohydrate degradation; glycolysis; pyruvate from D-glyceraldehyde 3-phosphate: step 1/5. In terms of biological role, catalyzes the oxidative phosphorylation of glyceraldehyde 3-phosphate (G3P) to 1,3-bisphosphoglycerate (BPG) using the cofactor NAD. The first reaction step involves the formation of a hemiacetal intermediate between G3P and a cysteine residue, and this hemiacetal intermediate is then oxidized to a thioester, with concomitant reduction of NAD to NADH. The reduced NADH is then exchanged with the second NAD, and the thioester is attacked by a nucleophilic inorganic phosphate to produce BPG. This chain is Glyceraldehyde-3-phosphate dehydrogenase (gapA), found in Mycobacterium avium.